A 397-amino-acid chain; its full sequence is UDP-GlcNAc:betaGal beta-1,3-N-acetylglucosaminyltransferase 8 (397 aa).

At 1-6 the chain is on the cytoplasmic side; it reads MRCPKC. A helical; Signal-anchor for type II membrane protein membrane pass occupies residues 7–23; it reads LLCLSALLTLLGLKVYI. The Lumenal portion of the chain corresponds to 24 to 397; that stretch reads EWTSESRLSK…KQLQDPRLQC (374 aa). The tract at residues 33–58 is disordered; that stretch reads KAYPSPRGTPPSPTPANPEPTLPANL. The span at 39 to 53 shows a compositional bias: pro residues; the sequence is RGTPPSPTPANPEPT. Asn-57 carries N-linked (GlcNAc...) asparagine glycosylation.

Belongs to the glycosyltransferase 31 family. In terms of assembly, interacts with B3GNT2; this interaction greatly increases B3GNT2 catalytic activity, independently of B3GNT8 enzymatic activity. In terms of tissue distribution, highly expressed in small intestine, pancreas, spleen, bone marrow, lung, throat, and ileum, and weakly in fetal brain, cerebellum, heart, liver, tongue, breast, uteri, and testis. Not detected in colon. Differentially expressed in human tumor cell lines.

Its subcellular location is the golgi apparatus membrane. It functions in the pathway protein modification; protein glycosylation. Functionally, beta-1,3-N-acetylglucosaminyltransferase that plays a role in the elongation of specific branch structures of multiantennary N-glycans. Has strong activity towards tetraantennary N-glycans and 2,6 triantennary glycans. The protein is UDP-GlcNAc:betaGal beta-1,3-N-acetylglucosaminyltransferase 8 of Homo sapiens (Human).